Here is a 487-residue protein sequence, read N- to C-terminus: N-succinylglutamate 5-semialdehyde dehydrogenase (487 aa).

221–226 (GSSDTG) is a binding site for NAD(+). Catalysis depends on residues Glu-244 and Cys-278.

This sequence belongs to the aldehyde dehydrogenase family. AstD subfamily.

It catalyses the reaction N-succinyl-L-glutamate 5-semialdehyde + NAD(+) + H2O = N-succinyl-L-glutamate + NADH + 2 H(+). It functions in the pathway amino-acid degradation; L-arginine degradation via AST pathway; L-glutamate and succinate from L-arginine: step 4/5. Catalyzes the NAD-dependent reduction of succinylglutamate semialdehyde into succinylglutamate. The chain is N-succinylglutamate 5-semialdehyde dehydrogenase from Burkholderia pseudomallei (strain 1106a).